A 261-amino-acid polypeptide reads, in one-letter code: Large ribosomal subunit protein uL2 (261 aa).

Residues 207–233 (VEHPHGGGNHQHIGKASTVKRGTPPGR) are disordered.

Belongs to the universal ribosomal protein uL2 family.

The protein resides in the cytoplasm. The sequence is that of Large ribosomal subunit protein uL2 (RpL8) from Aedes albopictus (Asian tiger mosquito).